Reading from the N-terminus, the 175-residue chain is Protein SYM1 (175 aa).

3 consecutive transmembrane segments (helical) span residues methionine 55 to alanine 75, valine 92 to alanine 112, and valine 143 to isoleucine 163.

This sequence belongs to the peroxisomal membrane protein PXMP2/4 family.

It is found in the mitochondrion inner membrane. Its function is as follows. May be involved in cellular response to stress. Required to maintain mitochondrial DNA (mtDNA) integrity and stability. This Gibberella zeae (strain ATCC MYA-4620 / CBS 123657 / FGSC 9075 / NRRL 31084 / PH-1) (Wheat head blight fungus) protein is Protein SYM1 (SYM1).